Here is a 52-residue protein sequence, read N- to C-terminus: ATP synthase protein 8 (52 aa).

Residues 6-26 form a helical membrane-spanning segment; sequence PINGFVILCSISLMLLTLLIN.

It belongs to the ATPase protein 8 family. F-type ATPases have 2 components, CF(1) - the catalytic core - and CF(0) - the membrane proton channel.

It is found in the mitochondrion membrane. Mitochondrial membrane ATP synthase (F(1)F(0) ATP synthase or Complex V) produces ATP from ADP in the presence of a proton gradient across the membrane which is generated by electron transport complexes of the respiratory chain. F-type ATPases consist of two structural domains, F(1) - containing the extramembraneous catalytic core and F(0) - containing the membrane proton channel, linked together by a central stalk and a peripheral stalk. During catalysis, ATP synthesis in the catalytic domain of F(1) is coupled via a rotary mechanism of the central stalk subunits to proton translocation. Part of the complex F(0) domain. Minor subunit located with subunit a in the membrane. The sequence is that of ATP synthase protein 8 (MT-ATP8) from Albinaria turrita (Door snail).